We begin with the raw amino-acid sequence, 454 residues long: Histidine--tRNA ligase (454 aa).

The protein belongs to the class-II aminoacyl-tRNA synthetase family. As to quaternary structure, homodimer.

Its subcellular location is the cytoplasm. The catalysed reaction is tRNA(His) + L-histidine + ATP = L-histidyl-tRNA(His) + AMP + diphosphate + H(+). In Porphyromonas gingivalis (strain ATCC BAA-308 / W83), this protein is Histidine--tRNA ligase.